Here is a 424-residue protein sequence, read N- to C-terminus: Na(+)/H(+) antiporter NhaP (424 aa).

A run of 12 helical transmembrane segments spans residues 3 to 23 (DLVA…YRFI), 25 to 45 (LPPT…VQGL), 66 to 86 (FSEV…ALHV), 96 to 116 (WPIG…IGGL), 130 to 152 (FIYC…LGIL), 170 to 190 (LFND…LQLG), 200 to 220 (ILFV…GYGV), 246 to 266 (ALAA…GLII), 296 to 316 (ALLF…WLHV), 320 to 340 (FALG…AILV), 358 to 378 (ILVW…SLPL), and 384 to 404 (LILS…GLSI).

Belongs to the monovalent cation:proton antiporter 1 (CPA1) transporter (TC 2.A.36) family.

It is found in the cell inner membrane. Inhibited by amiloride. Functionally, na(+)/H(+) antiporter that extrudes sodium in exchange for external protons. Also has weak Li(+)/H(+) antiport activity. This Pseudomonas aeruginosa (strain ATCC 15692 / DSM 22644 / CIP 104116 / JCM 14847 / LMG 12228 / 1C / PRS 101 / PAO1) protein is Na(+)/H(+) antiporter NhaP (nhaP).